The following is a 118-amino-acid chain: Small ribosomal subunit protein uS13 (118 aa).

The disordered stretch occupies residues His91 to Lys118.

It belongs to the universal ribosomal protein uS13 family. Part of the 30S ribosomal subunit. Forms a loose heterodimer with protein S19. Forms two bridges to the 50S subunit in the 70S ribosome.

Its function is as follows. Located at the top of the head of the 30S subunit, it contacts several helices of the 16S rRNA. In the 70S ribosome it contacts the 23S rRNA (bridge B1a) and protein L5 of the 50S subunit (bridge B1b), connecting the 2 subunits; these bridges are implicated in subunit movement. Contacts the tRNAs in the A and P-sites. The protein is Small ribosomal subunit protein uS13 of Methylococcus capsulatus (strain ATCC 33009 / NCIMB 11132 / Bath).